Here is a 340-residue protein sequence, read N- to C-terminus: CaiB/baiF CoA-transferase family protein ZK892.4 (340 aa).

Aspartate 154 serves as the catalytic Nucleophile.

It belongs to the CoA-transferase III family.

This chain is CaiB/baiF CoA-transferase family protein ZK892.4, found in Caenorhabditis elegans.